Consider the following 314-residue polypeptide: Glycerol-3-phosphate dehydrogenase [NAD(P)+] (314 aa).

Positions 11, 30, and 96 each coordinate NADPH. Positions 96, 124, and 126 each coordinate sn-glycerol 3-phosphate. A128 is a binding site for NADPH. Sn-glycerol 3-phosphate contacts are provided by K179, D232, S242, R243, and N244. Residue K179 is the Proton acceptor of the active site. R243 is an NADPH binding site. Position 264 (E264) interacts with NADPH.

This sequence belongs to the NAD-dependent glycerol-3-phosphate dehydrogenase family.

It is found in the cytoplasm. It catalyses the reaction sn-glycerol 3-phosphate + NAD(+) = dihydroxyacetone phosphate + NADH + H(+). The enzyme catalyses sn-glycerol 3-phosphate + NADP(+) = dihydroxyacetone phosphate + NADPH + H(+). The protein operates within membrane lipid metabolism; glycerophospholipid metabolism. Its function is as follows. Catalyzes the reduction of the glycolytic intermediate dihydroxyacetone phosphate (DHAP) to sn-glycerol 3-phosphate (G3P), the key precursor for phospholipid synthesis. This is Glycerol-3-phosphate dehydrogenase [NAD(P)+] from Paracoccus denitrificans (strain Pd 1222).